A 756-amino-acid polypeptide reads, in one-letter code: 5-methyltetrahydropteroyltriglutamate--homocysteine methyltransferase (756 aa).

5-methyltetrahydropteroyltri-L-glutamate is bound by residues 20–23 (RELK) and Lys-114. Residues 433 to 435 (IGS) and Glu-486 each bind L-homocysteine. Residues 433 to 435 (IGS) and Glu-486 each bind L-methionine. Residues 517-518 (RC) and Trp-563 contribute to the 5-methyltetrahydropteroyltri-L-glutamate site. Asp-601 contacts L-homocysteine. Asp-601 contacts L-methionine. Glu-607 is a binding site for 5-methyltetrahydropteroyltri-L-glutamate. Zn(2+) is bound by residues His-643, Cys-645, and Glu-667. The active-site Proton donor is His-696. Cys-728 is a Zn(2+) binding site.

Belongs to the vitamin-B12 independent methionine synthase family. Requires Zn(2+) as cofactor.

The catalysed reaction is 5-methyltetrahydropteroyltri-L-glutamate + L-homocysteine = tetrahydropteroyltri-L-glutamate + L-methionine. The protein operates within amino-acid biosynthesis; L-methionine biosynthesis via de novo pathway; L-methionine from L-homocysteine (MetE route): step 1/1. Functionally, catalyzes the transfer of a methyl group from 5-methyltetrahydrofolate to homocysteine resulting in methionine formation. This Mycolicibacterium paratuberculosis (strain ATCC BAA-968 / K-10) (Mycobacterium paratuberculosis) protein is 5-methyltetrahydropteroyltriglutamate--homocysteine methyltransferase.